The following is a 96-amino-acid chain: Cytoplasmic envelopment protein 3 (96 aa).

G2 carries the N-myristoyl glycine; by host lipid modification. A Di-leucine-like internalization motif motif is present at residues 18–19 (LI). The interval 37–43 (DIESEEE) is asp/Glu-rich (acidic). S40 is subject to Phosphoserine. A disordered region spans residues 44 to 96 (GNFYVPPDMRGVTRAPGRQRLRSSDPPSRHTHRRTPGGACPATQFPPPMSDSE). Over residues 87–96 (QFPPPMSDSE) the composition is skewed to pro residues.

It belongs to the herpesviridae cytoplasmic envelopment protein 3 family. As to quaternary structure, interacts with cytoplasmic envelopment protein 2; this interaction is essential for the proper localization of each protein to the assembly complex and thus for the production of infectious virus. Interacts with gE (via C-terminus). Interacts with gD (via C-terminus). Interacts with UL56. Post-translationally, myristoylation and palmitoylation (probably on one or more of the nearby cysteines at the N-terminus) enable membrane-binding and Golgi apparatus-specific targeting and are essential for efficient packaging. Phosphorylated. Phosphorylation does not seem to be required for recycling to the host Golgi apparatus. Packaging is selective for underphosphorylated forms.

Its subcellular location is the virion tegument. The protein localises to the virion membrane. It is found in the host cell membrane. It localises to the host Golgi apparatus membrane. Functionally, plays an important role in the cytoplasmic envelopment of tegument proteins and capsids during the assembly and egress processes. Also participates in viral entry at the fusion step probably by regulating the core fusion machinery. This is Cytoplasmic envelopment protein 3 from Homo sapiens (Human).